The sequence spans 435 residues: MKYFNTIVNWNMLNSNEQKNILLRPVIKNNNSIKKKVKKIIENIQVLGEKALREYTILFEKCHINKFEVSKEKMLSSSLYVNQSLKDAISTAKKNITSFHTAQILSPIDIETQVGVRCQQIYLPLNSVGIYIPSGIAPLFSTVLMLAIPAKIAGCKQIILCSPPPIDNTILYAANICGVDKIFQMGGAQAIAALAFGTKNIPKVDKIFGPGNAYVTEAKLQVSSIFNGPQIDMLAGPSELLIIADEASNADFIAADLLSQAEHSISSQVILLTPSLQLAKKVIISINNQLKNLSKSDDISTALDNSVIILTKDLFECIKISNIYAPEHLIIQTKEPRLILKEILNASSIFLGPWSPESAGDYASGTNHVLPTYGKSVSSSALGLCDFKKRVLIQELTSQGFINLSNTLKILSEAEKLEAHKNAVKIRVDFLKEKI.

3 residues coordinate NAD(+): Tyr131, Gln189, and Asn212. Residues Ser238, Gln260, and His263 each coordinate substrate. The Zn(2+) site is built by Gln260 and His263. Active-site proton acceptor residues include Glu327 and His328. Positions 328, 361, 415, and 420 each coordinate substrate. Zn(2+) is bound at residue Asp361. Zn(2+) is bound at residue His420.

It belongs to the histidinol dehydrogenase family. Homodimer. The cofactor is Zn(2+).

The catalysed reaction is L-histidinol + 2 NAD(+) + H2O = L-histidine + 2 NADH + 3 H(+). The protein operates within amino-acid biosynthesis; L-histidine biosynthesis; L-histidine from 5-phospho-alpha-D-ribose 1-diphosphate: step 9/9. Functionally, catalyzes the sequential NAD-dependent oxidations of L-histidinol to L-histidinaldehyde and then to L-histidine. The sequence is that of Histidinol dehydrogenase (hisD) from Buchnera aphidicola subsp. Schizaphis graminum (strain Sg).